The chain runs to 460 residues: Transcription factor TGA10 (460 aa).

The segment covering 1–11 (MQGHHQNHHQH) has biased composition (basic residues). Disordered regions lie at residues 1–29 (MQGHHQNHHQHLSSSSATSSHGNFMNKDG) and 43–163 (LDGQ…PKTL). Over residues 12-21 (LSSSSATSSH) the composition is skewed to low complexity. Polar residues-rich tracts occupy residues 65–81 (TQNLAMRPPTSTLNIFP) and 121–136 (DLTNHSQFHQPPQGSK). Residues 138 to 162 (IKKEGNRKGLASSDHDIPKSSDPKT) show a composition bias toward basic and acidic residues. The bZIP domain maps to 159-203 (DPKTLRRLAQNREAARKSRLRKKAYVQQLESCRIKLTQLEQEIQR). Residues 161–181 (KTLRRLAQNREAARKSRLRKK) form a basic motif region. The Nuclear localization signal signature appears at 163 to 170 (LRRLAQNR). The segment at 187 to 201 (LESCRIKLTQLEQEI) is leucine-zipper. One can recognise a DOG1 domain in the interval 236–455 (AAVFDMEYAR…QALSSLWLAR (220 aa)).

The protein belongs to the bZIP family. In terms of assembly, homodimer. Binds DNA as a dimer. Interacts with floral glutaredoxins GRXC7/ROXY1 and GRXC8/ROXY2 in the nucleus. Interacts with TGA1, TGA2, TGA3, TGA4, TGA5, TGA6, TGA7, TGA9 and PAN. Expressed at low levels in inflorescence apex and flowers.

It localises to the nucleus. Together with TGA9, basic leucine-zipper transcription factor required for anther development, probably via the activation of SPL expression in anthers and via the regulation of genes with functions in early and middle tapetal development. Required for signaling responses to pathogen-associated molecular patterns (PAMPs) such as flg22 that involves chloroplastic reactive oxygen species (ROS) production and subsequent expression of H(2)O(2)-responsive genes. This Arabidopsis thaliana (Mouse-ear cress) protein is Transcription factor TGA10.